We begin with the raw amino-acid sequence, 325 residues long: ADP-ribose glycohydrolase MACROD1 (325 aa).

Residues 21–55 are disordered; sequence LGAPRPWPGPSPGATRTRSSACGPPASLSAHHPRA. 3 positions are modified to N6-succinyllysine: Lys-96, Lys-103, and Lys-129. A Glycyl lysine isopeptide (Lys-Gly) (interchain with G-Cter in SUMO2) cross-link involves residue Lys-138. Positions 141-322 constitute a Macro domain; it reads EPKYKKDKQL…IYRERLPHYF (182 aa). 159-161 provides a ligand contact to substrate; the sequence is GDI. Residue Lys-163 is modified to N6-acetyllysine. Substrate-binding positions include 172–174, 179–184, 267–273, and Phe-306; these read AAN, GGGGVD, and ISTGVFG.

The protein belongs to the MacroD-type family. MacroD1/2-like subfamily. Interacts with ESR1; Interacts in a manner that is estrogen independent but is enhanced by estrogen. Interacts (via macro domain) with AR.

It localises to the nucleus. The enzyme catalyses 3''-O-acetyl-ADP-D-ribose + H2O = ADP-D-ribose + acetate + H(+). It catalyses the reaction 2''-O-acetyl-ADP-D-ribose + H2O = ADP-D-ribose + acetate + H(+). The catalysed reaction is 4-O-(ADP-D-ribosyl)-L-aspartyl-[protein] + H2O = L-aspartyl-[protein] + ADP-D-ribose + H(+). It carries out the reaction 5-O-(ADP-D-ribosyl)-L-glutamyl-[protein] + H2O = L-glutamyl-[protein] + ADP-D-ribose + H(+). The enzyme catalyses alpha-NAD(+) + H2O = ADP-D-ribose + nicotinamide + H(+). Its activity is regulated as follows. Subject to competitive inhibition by the product ADP-ribose. Its function is as follows. Removes ADP-ribose from aspartate and glutamate residues in proteins bearing a single ADP-ribose moiety. Inactive towards proteins bearing poly-ADP-ribose. Deacetylates O-acetyl-ADP ribose, a signaling molecule generated by the deacetylation of acetylated lysine residues in histones and other proteins. Plays a role in estrogen signaling. Binds to androgen receptor (AR) and amplifies the transactivation function of AR in response to androgen. May play an important role in carcinogenesis and/or progression of hormone-dependent cancers by feed-forward mechanism that activates ESR1 transactivation. Could be an ESR1 coactivator, providing a positive feedback regulatory loop for ESR1 signal transduction. Could be involved in invasive growth by down-regulating CDH1 in endometrial cancer cells. Enhances ESR1-mediated transcription activity. The polypeptide is ADP-ribose glycohydrolase MACROD1 (MACROD1) (Bos taurus (Bovine)).